The primary structure comprises 218 residues: Ribose-5-phosphate isomerase A (218 aa).

Substrate-binding positions include 28 to 31, 81 to 84, and 94 to 97; these read TGST, DGAD, and KGGG. Glutamate 103 serves as the catalytic Proton acceptor. Substrate is bound at residue lysine 121.

The protein belongs to the ribose 5-phosphate isomerase family. In terms of assembly, homodimer.

The catalysed reaction is aldehydo-D-ribose 5-phosphate = D-ribulose 5-phosphate. It functions in the pathway carbohydrate degradation; pentose phosphate pathway; D-ribose 5-phosphate from D-ribulose 5-phosphate (non-oxidative stage): step 1/1. In terms of biological role, catalyzes the reversible conversion of ribose-5-phosphate to ribulose 5-phosphate. The polypeptide is Ribose-5-phosphate isomerase A (Shewanella piezotolerans (strain WP3 / JCM 13877)).